Consider the following 1352-residue polypeptide: Inhibitor of Bruton tyrosine kinase (1352 aa).

2 ANK repeats span residues 51–80 (FGRNAGHLASSCGKKGVLDWLIEKGVDLLV) and 85–114 (SGWTALHRSVFYGHIDCVWSLLKHGVSLYM). RCC1 repeat units lie at residues 141–194 (PTEV…FLSQ), 195–246 (KGQV…VLTD), and 248–301 (GCVY…LWTR). Residues 565-645 (HDVTFQVGNR…MYTDTCDLLT (81 aa)) form the BTB 1 domain. Residues 692–716 (AHTLSERQKSKPKSSKKGKGVGDDD) are disordered. Residues 701–710 (SKPKSSKKGK) show a composition bias toward basic residues. The BTB 2 domain maps to 769–837 (YDVTMKSVDG…LYTDEAVVIK (69 aa)). The interval 976–1002 (FKKAKTRAKKKPRKRSDSSGGYTLSDV) is disordered. Over residues 977–989 (KKAKTRAKKKPRK) the composition is skewed to basic residues. S991 is modified (phosphoserine). Positions 993-1002 (SSGGYTLSDV) are enriched in polar residues. Residues S1005, S1031, S1034, S1040, S1046, S1055, S1084, S1111, S1113, and S1116 each carry the phosphoserine modification. A disordered region spans residues 1032-1094 (EGSYAGVASP…PTTKSAPQFI (63 aa)). Polar residues predominate over residues 1084–1094 (SPTTKSAPQFI).

Interacts with the PH domain of BTK.

It is found in the cytoplasm. The protein resides in the membrane. Functionally, acts as an inhibitor of BTK tyrosine kinase activity, thereby playing a role in B-cell development. Down-regulates BTK kinase activity, leading to interference with BTK-mediated calcium mobilization and NF-kappa-B-driven transcription. This chain is Inhibitor of Bruton tyrosine kinase (Ibtk), found in Mus musculus (Mouse).